Reading from the N-terminus, the 155-residue chain is S-ribosylhomocysteine lyase (155 aa).

His58, His62, and Cys125 together coordinate Fe cation.

The protein belongs to the LuxS family. Homodimer. It depends on Fe cation as a cofactor.

It carries out the reaction S-(5-deoxy-D-ribos-5-yl)-L-homocysteine = (S)-4,5-dihydroxypentane-2,3-dione + L-homocysteine. Its function is as follows. Involved in the synthesis of autoinducer 2 (AI-2) which is secreted by bacteria and is used to communicate both the cell density and the metabolic potential of the environment. The regulation of gene expression in response to changes in cell density is called quorum sensing. Catalyzes the transformation of S-ribosylhomocysteine (RHC) to homocysteine (HC) and 4,5-dihydroxy-2,3-pentadione (DPD). The sequence is that of S-ribosylhomocysteine lyase from Helicobacter pylori (strain Shi470).